We begin with the raw amino-acid sequence, 355 residues long: Phenylalanine--tRNA ligase alpha subunit (355 aa).

A Mg(2+)-binding site is contributed by Glu273.

The protein belongs to the class-II aminoacyl-tRNA synthetase family. Phe-tRNA synthetase alpha subunit type 1 subfamily. As to quaternary structure, tetramer of two alpha and two beta subunits. Mg(2+) is required as a cofactor.

The protein resides in the cytoplasm. It carries out the reaction tRNA(Phe) + L-phenylalanine + ATP = L-phenylalanyl-tRNA(Phe) + AMP + diphosphate + H(+). The polypeptide is Phenylalanine--tRNA ligase alpha subunit (Bifidobacterium longum subsp. infantis (strain ATCC 15697 / DSM 20088 / JCM 1222 / NCTC 11817 / S12)).